A 400-amino-acid polypeptide reads, in one-letter code: MTTIGTPLSPRATKVMLLGSGELGREVLIALQRLGVETIAVDRYDNAPGQQVAHHARTIAMTDPEQLRALIEAERPDLVVPEIEAIATPALEALEAEGVVTVIPTARAARLTMDREGIRRLAAETLGLPTSPYRFCDSLEELRAAIDGTVGYPCVVKPVMSSSGKGQSKIDGPEDVAPAWEYAMSGSRVSNTRIIVEGFVDFDYEITLLTVRARGASGEVQTQFCEPIGHRQVSGDYVESWQPHPMPSTALDRSRQIAKAVTENLGGQGIFGVELFVKGDDVWFSEVSPRPHDTGMVTMVTQWQNEFELHARAILGLPVDTTLKSPGASAVIYGGVDAEGVVFDGVDRALAVPHTDIRLFGKPESFVNRRMGVALAFADDVDTARRNAAEAASRVTPRAV.

Residues 22–23 (EL) and Glu82 each bind N(1)-(5-phospho-beta-D-ribosyl)glycinamide. ATP is bound by residues Arg115, Lys157, 162-167 (SSGKGQ), 197-200 (EGFV), and Glu205. Residues 120 to 315 (RLAAETLGLP…EFELHARAIL (196 aa)) enclose the ATP-grasp domain. Glu274 and Glu286 together coordinate Mg(2+). N(1)-(5-phospho-beta-D-ribosyl)glycinamide is bound by residues Asp293, Lys362, and 369–370 (RR).

It belongs to the PurK/PurT family. Homodimer.

The enzyme catalyses N(1)-(5-phospho-beta-D-ribosyl)glycinamide + formate + ATP = N(2)-formyl-N(1)-(5-phospho-beta-D-ribosyl)glycinamide + ADP + phosphate + H(+). It participates in purine metabolism; IMP biosynthesis via de novo pathway; N(2)-formyl-N(1)-(5-phospho-D-ribosyl)glycinamide from N(1)-(5-phospho-D-ribosyl)glycinamide (formate route): step 1/1. Involved in the de novo purine biosynthesis. Catalyzes the transfer of formate to 5-phospho-ribosyl-glycinamide (GAR), producing 5-phospho-ribosyl-N-formylglycinamide (FGAR). Formate is provided by PurU via hydrolysis of 10-formyl-tetrahydrofolate. The protein is Formate-dependent phosphoribosylglycinamide formyltransferase of Mycolicibacterium gilvum (strain PYR-GCK) (Mycobacterium gilvum (strain PYR-GCK)).